Consider the following 956-residue polypeptide: Transient receptor potential channel pyrexia (956 aa).

The Cytoplasmic segment spans residues 1–491 (MENVRFSIIE…LFLKWRRIRK (491 aa)). ANK repeat units follow at residues 132-161 (RGRTPLHFACCRANAPIAKVLLDFGADPNR), 166-195 (KEVTSLHCAASSKSVECILLLLRRKASINI), 198-227 (EKRSALHYAIDVNAVDCVEILLKYGADPNT), 231-260 (YTETPLHTASAAGFAKCVQLLLSHNADVRS), 265-294 (GKVTALHLAAENDYVECARLLLEHRAEVDC), 298-327 (SHQTPLHLACLSQSIGTVDLLISYGANVNA), 331-362 (DGRTALHAAIVKQSRSLDCCNALLKAGADVNK), and 366-395 (YGYTPLHIAALNEFSSCVYTFIEHGADITA). The chain crosses the membrane as a helical span at residues 492 to 512 (FFLMSLAYHTLFVILFTFYVI). The Extracellular segment spans residues 513–525 (WVYVRCCKKEELC). Residues 526–546 (VAPGYVSTIGYLVIILNLILL) form a helical membrane-spanning segment. Topologically, residues 547–565 (GKEVFQMAHGLRGYAKYWE) are cytoplasmic. The helical transmembrane segment at 566–584 (NWLQWTIGTGVLLCVTPET) threads the bilayer. Residues 585–601 (VRTDDLTAVPVWQHHVA) are Extracellular-facing. The chain crosses the membrane as a helical span at residues 602-622 (AIVILLVWLELMMLVGRFPIF). The Cytoplasmic portion of the chain corresponds to 623–638 (GVYVQMFTKVAVNFAK). Residues 639 to 659 (FLLAYICLLVAFGLSFAVLFN) traverse the membrane as a helical segment. The Extracellular portion of the chain corresponds to 660–701 (DYPAFENITWSFLKSITMMSGELEFEDIFYGDYAVKFPVTAH). N-linked (GlcNAc...) asparagine glycosylation occurs at N666. The chain crosses the membrane as a helical span at residues 702-722 (IIFLSFVLLVTVILTNLMVGL). The Cytoplasmic portion of the chain corresponds to 723-956 (AVSDIQGLQV…VASSHIRRHR (234 aa)).

It belongs to the transient receptor (TC 1.A.4) family. STrpC subfamily. In terms of assembly, homooligomer; between isoform A and isoform B. As to expression, expressed in various peripheral nerves and the central nerves in embryos. In adults, it is expressed in sensory neurons lying beneath the bristles around eyes, neurons innervating the bristles on the back of thorax and neurons in maxillary palps, proboscis and antennae. Expressed in multidendritic neurons, which mediate temperature sensing, as well as non-multidendritic neurons in larval epidermis. Localizes ubiquitously throughout neurites.

Its subcellular location is the membrane. Its function is as follows. Receptor-activated non-selective cation channel involved in protection or tolerance from high temperature stress. Activated by temperatures above 40 degrees Celsius. More permeable to K(+) than to Na(+). May act in stress protection allow flies to survive in natural environments. The polypeptide is Transient receptor potential channel pyrexia (pyx) (Drosophila melanogaster (Fruit fly)).